Reading from the N-terminus, the 477-residue chain is Probable F-box protein At5g25300 (477 aa).

Positions 346 to 377 (VDMNKEDSQIEINEKETKINQEHDQSDETQAK) form a coiled coil. The F-box domain occupies 412–458 (SPPWSELPGDILRSVFERLSFVDFQRAKQTCPIKRSKSNCLRLWLIT).

This chain is Probable F-box protein At5g25300, found in Arabidopsis thaliana (Mouse-ear cress).